A 491-amino-acid chain; its full sequence is G2/mitotic-specific cyclin-A (491 aa).

Positions 1-21 are disordered; the sequence is MASFQIHQDMSNKENPGIKIP. Residues 206-332 form the Cyclin N-terminal domain; that stretch reads DILEYFRESE…ILKILSFDLC (127 aa).

It belongs to the cyclin family. Cyclin AB subfamily. As to quaternary structure, component of the Frs-CycA-Cdk1 complex composed of CycA, Cdk1 and Z600. Interacts (via C-terminus) with Z600. Interacts with otu and (via C-terminus) with bam; the interaction stabilizes CycA by negatively regulating its ubiquitination. Ubiquitinated. Ubiquitination state is negatively regulated by a deubiquitinase complex made up of bam and otu.

Its function is as follows. Essential for the control of the cell cycle at the G2/M (mitosis) transition. Interacts with the Cdk1 and Cdk2 protein kinases to form MPF. G2/M cyclins accumulate steadily during G2 and are abruptly destroyed at mitosis. This is G2/mitotic-specific cyclin-A (CycA) from Drosophila melanogaster (Fruit fly).